The chain runs to 116 residues: DNA polymerase epsilon subunit 4 (116 aa).

Positions 1–10 are enriched in low complexity; sequence MAAAAPGSGA. Positions 1 to 36 are disordered; sequence MAAAAPGSGAAREEEGTGGDAATPQPPAPTSAPGAR.

Component of the DNA polymerase epsilon complex consisting of four subunits: the catalytic subunit POLE and the accessory subunits POLE2, POLE3 and POLE4. Interaction with POLE3 is a prerequisite for further binding with POLE and POLE2.

It is found in the nucleus. Accessory component of the DNA polymerase epsilon complex. Participates in DNA repair and in chromosomal DNA replication. The protein is DNA polymerase epsilon subunit 4 (POLE4) of Bos taurus (Bovine).